Here is a 578-residue protein sequence, read N- to C-terminus: Arginine--tRNA ligase (578 aa).

Residues 127–137 (PNLAKEMHVGH) carry the 'HIGH' region motif.

The protein belongs to the class-I aminoacyl-tRNA synthetase family. In terms of assembly, monomer.

The protein resides in the cytoplasm. The catalysed reaction is tRNA(Arg) + L-arginine + ATP = L-arginyl-tRNA(Arg) + AMP + diphosphate. This chain is Arginine--tRNA ligase, found in Pseudomonas fluorescens (strain SBW25).